The primary structure comprises 290 residues: ATP synthase gamma chain (290 aa).

This sequence belongs to the ATPase gamma chain family. F-type ATPases have 2 components, CF(1) - the catalytic core - and CF(0) - the membrane proton channel. CF(1) has five subunits: alpha(3), beta(3), gamma(1), delta(1), epsilon(1). CF(0) has three main subunits: a, b and c.

It localises to the cell membrane. In terms of biological role, produces ATP from ADP in the presence of a proton gradient across the membrane. The gamma chain is believed to be important in regulating ATPase activity and the flow of protons through the CF(0) complex. The chain is ATP synthase gamma chain from Listeria innocua serovar 6a (strain ATCC BAA-680 / CLIP 11262).